An 88-amino-acid chain; its full sequence is Small ribosomal subunit protein bS20 (88 aa).

Residues 1–23 show a composition bias toward basic and acidic residues; that stretch reads MPNTKSAEKALRVADANRQENRR. Disordered regions lie at residues 1–28 and 69–88; these read MPNT…KSQV and PKNA…QAAK. Basic residues predominate over residues 71–81; it reads NAARRKSRLMK.

The protein belongs to the bacterial ribosomal protein bS20 family.

Binds directly to 16S ribosomal RNA. The protein is Small ribosomal subunit protein bS20 of Dehalococcoides mccartyi (strain ATCC BAA-2266 / KCTC 15142 / 195) (Dehalococcoides ethenogenes (strain 195)).